Here is a 119-residue protein sequence, read N- to C-terminus: Large ribosomal subunit protein uL22c (119 aa).

Belongs to the universal ribosomal protein uL22 family. Part of the 50S ribosomal subunit.

The protein localises to the plastid. It localises to the chloroplast. Functionally, this protein binds specifically to 23S rRNA. In terms of biological role, the globular domain of the protein is located near the polypeptide exit tunnel on the outside of the subunit, while an extended beta-hairpin is found that lines the wall of the exit tunnel in the center of the 70S ribosome. This Spirogyra maxima (Green alga) protein is Large ribosomal subunit protein uL22c (rpl22).